The following is a 542-amino-acid chain: GMP synthase [glutamine-hydrolyzing] (542 aa).

One can recognise a Glutamine amidotransferase type-1 domain in the interval 28-218; sequence MIVILDFGSQ…VYHICECEPT (191 aa). The active-site Nucleophile is the C105. Active-site residues include H192 and E194. A GMPS ATP-PPase domain is found at 219–417; the sequence is WTTEAFVDET…IGLPEEIVRR (199 aa). 246–252 contacts ATP; it reads SGGVDSS.

Homodimer.

It carries out the reaction XMP + L-glutamine + ATP + H2O = GMP + L-glutamate + AMP + diphosphate + 2 H(+). It participates in purine metabolism; GMP biosynthesis; GMP from XMP (L-Gln route): step 1/1. In terms of biological role, catalyzes the synthesis of GMP from XMP. This Crocosphaera subtropica (strain ATCC 51142 / BH68) (Cyanothece sp. (strain ATCC 51142)) protein is GMP synthase [glutamine-hydrolyzing].